The sequence spans 450 residues: tRNA modification GTPase MnmE (450 aa).

(6S)-5-formyl-5,6,7,8-tetrahydrofolate is bound by residues Arg-23, Glu-79, and Lys-118. Residues 214–374 (GITLILVGKP…LKEHILNKVG (161 aa)) form the TrmE-type G domain. K(+) is bound at residue Asn-224. GTP is bound by residues 224-229 (NAGKSS), 243-249 (TSIAGTT), and 268-271 (DTAG). Mg(2+) is bound at residue Ser-228. 3 residues coordinate K(+): Thr-243, Ile-245, and Thr-248. Thr-249 serves as a coordination point for Mg(2+). Lys-450 contacts (6S)-5-formyl-5,6,7,8-tetrahydrofolate.

It belongs to the TRAFAC class TrmE-Era-EngA-EngB-Septin-like GTPase superfamily. TrmE GTPase family. Homodimer. Heterotetramer of two MnmE and two MnmG subunits. The cofactor is K(+).

The protein localises to the cytoplasm. In terms of biological role, exhibits a very high intrinsic GTPase hydrolysis rate. Involved in the addition of a carboxymethylaminomethyl (cmnm) group at the wobble position (U34) of certain tRNAs, forming tRNA-cmnm(5)s(2)U34. The protein is tRNA modification GTPase MnmE of Francisella tularensis subsp. tularensis (strain FSC 198).